The following is a 433-amino-acid chain: MSTKNEQLFAQARKHIPGGVNSPVRAFAGVGGTPIFMHRANGSKIYDTEDNAYIDYVGSWGPMILGHAHPKVIDAVKKAADDGLSFGTPTPFETTVADKICEIVPSVEMIRMTSSGTEATMSAIRLARGYTQRDKIVKFEGCYHGHSDSLLVKAGSGMLDIGEPTSKGVPADFAKHTITIPYNDPQAIKDCFEKWGEEIACVILEPIAGNMNMVIPSQEFHDTLRAECTANGAVLIFDEVMTGFRVGLGGAQAHFGIDPDLTCFGKIIGAGLPVGAFGGKKDIMSCIAPLGGVYQAGTLSGNPLAMRAGIAMFEDLTAEGFYDELSAKVDHLVDGFQAAADKHGINMRTNKLGGMFGMFFVKDSATTVPQNFDDVTECDMELFNTFFHGMLDRGIYLAPSAYEAGFMSIKHSNEDIEATIKAADEIFAEMAKA.

Lysine 266 is subject to N6-(pyridoxal phosphate)lysine.

It belongs to the class-III pyridoxal-phosphate-dependent aminotransferase family. HemL subfamily. As to quaternary structure, homodimer. It depends on pyridoxal 5'-phosphate as a cofactor.

It is found in the cytoplasm. It carries out the reaction (S)-4-amino-5-oxopentanoate = 5-aminolevulinate. It participates in porphyrin-containing compound metabolism; protoporphyrin-IX biosynthesis; 5-aminolevulinate from L-glutamyl-tRNA(Glu): step 2/2. In Psychrobacter cryohalolentis (strain ATCC BAA-1226 / DSM 17306 / VKM B-2378 / K5), this protein is Glutamate-1-semialdehyde 2,1-aminomutase.